We begin with the raw amino-acid sequence, 604 residues long: Phenylalanine--tRNA ligase beta subunit (604 aa).

The B5 domain occupies 327-402 (YFQEKREVAH…LGRTLDRFSP (76 aa)). Mg(2+)-binding residues include Asp-380, Asp-386, Glu-389, and Glu-390.

It belongs to the phenylalanyl-tRNA synthetase beta subunit family. Type 2 subfamily. In terms of assembly, tetramer of two alpha and two beta subunits. Mg(2+) is required as a cofactor.

Its subcellular location is the cytoplasm. The catalysed reaction is tRNA(Phe) + L-phenylalanine + ATP = L-phenylalanyl-tRNA(Phe) + AMP + diphosphate + H(+). The sequence is that of Phenylalanine--tRNA ligase beta subunit from Treponema pallidum subsp. pallidum (strain SS14).